A 238-amino-acid chain; its full sequence is Ribonuclease-like storage protein (238 aa).

An N-terminal signal peptide occupies residues 1 to 23 (MRAIYIISVIIVSLSIFSWGGNA). Glutamine 37 is a binding site for RNA. The cysteines at positions 43 and 49 are disulfide-linked. Residues histidine 61, phenylalanine 109, 112-113 (HE), and 116-117 (KH) contribute to the RNA site. Catalysis depends on histidine 61, which acts as the Proton donor. 2 disulfides stabilise this stretch: cysteine 76-cysteine 120 and cysteine 196-cysteine 207. Glutamate 113 is a catalytic residue. Histidine 117 (proton acceptor) is an active-site residue.

This sequence belongs to the RNase T2 family. As to quaternary structure, homodimer. As to expression, root.

Functionally, may act as a storage protein providing a nitrogen source. Seems to have no RNase activity although it has conserved the active site residues. This chain is Ribonuclease-like storage protein, found in Panax ginseng (Korean ginseng).